A 549-amino-acid polypeptide reads, in one-letter code: Siroheme synthase (549 aa).

The precorrin-2 dehydrogenase /sirohydrochlorin ferrochelatase stretch occupies residues 1 to 203 (MNTFPLFFKL…GNENEALAQL (203 aa)). NAD(+) is bound by residues 22–23 (DV) and 43–44 (PS). Ser-128 is subject to Phosphoserine. Residues 247–549 (GEVYIVGAGP…DGDLEQLIIG (303 aa)) are uroporphyrinogen-III C-methyltransferase. An S-adenosyl-L-methionine-binding site is contributed by Pro-256. The active-site Proton acceptor is the Asp-279. The Proton donor role is filled by Lys-301. S-adenosyl-L-methionine-binding positions include 332–334 (GGD), Ile-337, 362–363 (TA), Met-414, and Ala-443.

This sequence in the N-terminal section; belongs to the precorrin-2 dehydrogenase / sirohydrochlorin ferrochelatase family. In the C-terminal section; belongs to the precorrin methyltransferase family.

It carries out the reaction uroporphyrinogen III + 2 S-adenosyl-L-methionine = precorrin-2 + 2 S-adenosyl-L-homocysteine + H(+). The enzyme catalyses precorrin-2 + NAD(+) = sirohydrochlorin + NADH + 2 H(+). The catalysed reaction is siroheme + 2 H(+) = sirohydrochlorin + Fe(2+). The protein operates within cofactor biosynthesis; adenosylcobalamin biosynthesis; precorrin-2 from uroporphyrinogen III: step 1/1. Its pathway is cofactor biosynthesis; adenosylcobalamin biosynthesis; sirohydrochlorin from precorrin-2: step 1/1. It participates in porphyrin-containing compound metabolism; siroheme biosynthesis; precorrin-2 from uroporphyrinogen III: step 1/1. It functions in the pathway porphyrin-containing compound metabolism; siroheme biosynthesis; siroheme from sirohydrochlorin: step 1/1. The protein operates within porphyrin-containing compound metabolism; siroheme biosynthesis; sirohydrochlorin from precorrin-2: step 1/1. Multifunctional enzyme that catalyzes the SAM-dependent methylations of uroporphyrinogen III at position C-2 and C-7 to form precorrin-2 via precorrin-1. Then it catalyzes the NAD-dependent ring dehydrogenation of precorrin-2 to yield sirohydrochlorin. Finally, it catalyzes the ferrochelation of sirohydrochlorin to yield siroheme. In Psychrobacter arcticus (strain DSM 17307 / VKM B-2377 / 273-4), this protein is Siroheme synthase.